A 667-amino-acid chain; its full sequence is Acetolactate synthase 1, chloroplastic (667 aa).

Low complexity predominate over residues 1-35 (MAAAAPSPSSSAFSKTLSPSSSTSSTLLPRSTFPF). The segment at 1 to 45 (MAAAAPSPSSSAFSKTLSPSSSTSSTLLPRSTFPFPHHPHKTTPP) is disordered. Residues 1 to 94 (MAAAAPSPSS…VSRFAPDEPR (94 aa)) constitute a chloroplast transit peptide. Thiamine diphosphate is bound at residue glutamate 141. Cysteine 161 and cysteine 307 form a disulfide bridge. Residues arginine 243, 349 to 370 (HGTV…FGVR), and 392 to 411 (DIDS…ICAD) each bind FAD. The interval 484–564 (QHQMWAAQYY…VKIMLLNNQH (81 aa)) is thiamine pyrophosphate binding. Residues aspartate 535 and asparagine 562 each contribute to the Mg(2+) site.

It belongs to the TPP enzyme family. Mg(2+) serves as cofactor. Thiamine diphosphate is required as a cofactor.

Its subcellular location is the plastid. It is found in the chloroplast. It carries out the reaction 2 pyruvate + H(+) = (2S)-2-acetolactate + CO2. The protein operates within amino-acid biosynthesis; L-isoleucine biosynthesis; L-isoleucine from 2-oxobutanoate: step 1/4. It functions in the pathway amino-acid biosynthesis; L-valine biosynthesis; L-valine from pyruvate: step 1/4. This is Acetolactate synthase 1, chloroplastic (ALS SURA) from Nicotiana tabacum (Common tobacco).